The chain runs to 249 residues: Electron transfer flavoprotein subunit beta (249 aa).

Belongs to the ETF beta-subunit/FixA family. As to quaternary structure, heterodimer of an alpha and a beta subunit. Requires FAD as cofactor. The cofactor is AMP.

In terms of biological role, the electron transfer flavoprotein serves as a specific electron acceptor for other dehydrogenases. It transfers the electrons to the main respiratory chain via ETF-ubiquinone oxidoreductase (ETF dehydrogenase). The sequence is that of Electron transfer flavoprotein subunit beta (etfB) from Pseudomonas aeruginosa (strain ATCC 15692 / DSM 22644 / CIP 104116 / JCM 14847 / LMG 12228 / 1C / PRS 101 / PAO1).